The following is a 392-amino-acid chain: Peptidoglycan hydrolase PcsB (392 aa).

An N-terminal signal peptide occupies residues 1–27; the sequence is MKKKILASLLLSTVMVSQVAVLTTAHA. Coiled coils occupy residues 34–96 and 191–227; these read IAAQ…LSKN and TKQA…AEAE. Residues 47-267 form an interacts with large extracellular loop of FtsX region; the sequence is QQQEAQKQVD…TAQVQAVSES (221 aa). Residues 267–390 enclose the Peptidase C51 domain; the sequence is SAAAPVRAKV…TSEGFVTYIY (124 aa).

In terms of assembly, homodimer. Interacts (via N-terminal coiled coil domain) with FtsX (via large extracellular loop). This interaction directs PcsB to equatorial and septal sites of dividing cells. Interacts with FtsE.

The protein resides in the cell membrane. The protein localises to the cell septum. It localises to the secreted. Its activity is regulated as follows. Lacks peptidoglycan-hydrolase activity in vitro, probably due to auto-inhibition by the CC domain. In the homodimer, interaction between the CC domain in one monomer and the hydrolase active site in the peptidase C51/CHAP domain in the other monomer probably mediates auto-inhibition of the hydrolase activity. Its function is as follows. Peptidoglycan-hydrolase activity. Required in maintaining normal growth and cellular morphology. Involved in splitting of the septum during cell division. The sequence is that of Peptidoglycan hydrolase PcsB from Streptococcus pneumoniae serotype 2 (strain D39 / NCTC 7466).